A 466-amino-acid chain; its full sequence is Aladin (466 aa).

WD repeat units follow at residues 135–174 (WLNSDVRYLAWNQHFFCLAVAGVDDVVRIYTKSSSATTAT), 179–218 (PSQTQITCMAWRPLCASEIVIGCRQGLCFWEVDSTLHLGR), 229–269 (PNNL…MQPL), 271–310 (RLGPPGSLLKWSPDNDWLFAATVDRVFRVWNCHQQWTTER), and 378–418 (LVGG…FDLQ).

The protein resides in the nucleus. It localises to the nuclear pore complex. It is found in the cytoplasm. Its subcellular location is the cytoskeleton. The protein localises to the spindle. Functionally, involved in mitotic spindle assembly. The polypeptide is Aladin (Drosophila melanogaster (Fruit fly)).